Reading from the N-terminus, the 241-residue chain is Pyridoxal phosphate phosphatase PHOSPHO2 (241 aa).

The active-site Nucleophile is D8. Residues D8 and D10 each contribute to the Mg(2+) site. D10 functions as the Proton donor in the catalytic mechanism. The substrate site is built by D19 and D99. D179 serves as a coordination point for Mg(2+).

This sequence belongs to the HAD-like hydrolase superfamily. PHOSPHO family. It depends on Mg(2+) as a cofactor.

The catalysed reaction is pyridoxal 5'-phosphate + H2O = pyridoxal + phosphate. In terms of biological role, phosphatase that has high activity toward pyridoxal 5'-phosphate (PLP). Also active at much lower level toward pyrophosphate, phosphoethanolamine (PEA), phosphocholine (PCho), phospho-l-tyrosine, fructose-6-phosphate, p-nitrophenyl phosphate, and h-glycerophosphate. The sequence is that of Pyridoxal phosphate phosphatase PHOSPHO2 (PHOSPHO2) from Homo sapiens (Human).